Consider the following 333-residue polypeptide: D-glutamate N-acetyltransferase (333 aa).

It belongs to the N-acetyltransferase DgcN family.

The catalysed reaction is D-glutamate + acetyl-CoA = N-acetyl-D-glutamate + CoA + H(+). It participates in amino-acid degradation. N-acetyltransferase involved in a deamination-independent D-glutamate degradation pathway, named the DgcN-DgcA pathway. Catalyzes the transfer of the acetyl moiety from acetyl-CoA to D-glutamate to generate N-acetyl-D-glutamate. The chain is D-glutamate N-acetyltransferase from Tritonibacter scottomollicae (Epibacterium scottomollicae).